We begin with the raw amino-acid sequence, 232 residues long: Phosphatidylserine decarboxylase proenzyme (232 aa).

The active-site Schiff-base intermediate with substrate; via pyruvic acid is the Ser-190. Pyruvic acid (Ser); by autocatalysis is present on Ser-190.

Belongs to the phosphatidylserine decarboxylase family. PSD-A subfamily. Heterodimer of a large membrane-associated beta subunit and a small pyruvoyl-containing alpha subunit. It depends on pyruvate as a cofactor. In terms of processing, is synthesized initially as an inactive proenzyme. Formation of the active enzyme involves a self-maturation process in which the active site pyruvoyl group is generated from an internal serine residue via an autocatalytic post-translational modification. Two non-identical subunits are generated from the proenzyme in this reaction, and the pyruvate is formed at the N-terminus of the alpha chain, which is derived from the carboxyl end of the proenzyme. The post-translation cleavage follows an unusual pathway, termed non-hydrolytic serinolysis, in which the side chain hydroxyl group of the serine supplies its oxygen atom to form the C-terminus of the beta chain, while the remainder of the serine residue undergoes an oxidative deamination to produce ammonia and the pyruvoyl prosthetic group on the alpha chain.

The protein resides in the cell membrane. The catalysed reaction is a 1,2-diacyl-sn-glycero-3-phospho-L-serine + H(+) = a 1,2-diacyl-sn-glycero-3-phosphoethanolamine + CO2. The protein operates within phospholipid metabolism; phosphatidylethanolamine biosynthesis; phosphatidylethanolamine from CDP-diacylglycerol: step 2/2. Catalyzes the formation of phosphatidylethanolamine (PtdEtn) from phosphatidylserine (PtdSer). The protein is Phosphatidylserine decarboxylase proenzyme of Rhodopseudomonas palustris (strain BisB18).